Here is a 77-residue protein sequence, read N- to C-terminus: Neurexophilin-4 (77 aa).

Residues 1–77 are v (Cys-rich); it reads NCHVEYEKTN…NFQSEHPYFG (77 aa).

Belongs to the neurexophilin family. In terms of processing, may be proteolytically processed at the boundary between the N-terminal non-conserved and the central conserved domain in neuron-like cells.

The protein localises to the secreted. Functionally, may be signaling molecules that resemble neuropeptides and that act by binding to alpha-neurexins and possibly other receptors. The protein is Neurexophilin-4 (NXPH4) of Macaca mulatta (Rhesus macaque).